The sequence spans 734 residues: Photosystem I P700 chlorophyll a apoprotein A2 (734 aa).

8 helical membrane passes run 46 to 69 (IFASHFGQLAIIFLWTSGNLFHVA), 135 to 158 (LYTGALFLLFLSALSLIGGWLHLQ), 175 to 199 (LNHHLSGLFGVSSLAWTGHLVHVAI), 273 to 291 (MAHHHLAIAILFLIAGHMY), 330 to 353 (IHFQLGLALASLGVITSLVAQHMY), 369 to 395 (AALYTHHQYIAGFIMTGAFAHGAIFFI), 417 to 439 (AIISHLSWASLFLGFHTLGLYVH), and 517 to 535 (FLVHHAIALGLHTTTLILV). 2 residues coordinate [4Fe-4S] cluster: Cys-559 and Cys-568. The next 2 membrane-spanning stretches (helical) occupy residues 575–596 (AFYLAVFWMLNTIGWVTFYWHW) and 643–665 (LSVWAWMFLFGHLVWATGFMFLI). Residues His-654, Met-662, and Tyr-670 each contribute to the chlorophyll a site. Trp-671 contacts phylloquinone. The chain crosses the membrane as a helical span at residues 707 to 727 (LVGLAHFSVGYIFTYAAFLIA).

It belongs to the PsaA/PsaB family. In terms of assembly, the PsaA/B heterodimer binds the P700 chlorophyll special pair and subsequent electron acceptors. PSI consists of a core antenna complex that captures photons, and an electron transfer chain that converts photonic excitation into a charge separation. The eukaryotic PSI reaction center is composed of at least 11 subunits. Requires P700 is a chlorophyll a/chlorophyll a' dimer, A0 is one or more chlorophyll a, A1 is one or both phylloquinones and FX is a shared 4Fe-4S iron-sulfur center. as cofactor.

The protein resides in the plastid. It is found in the chloroplast thylakoid membrane. It catalyses the reaction reduced [plastocyanin] + hnu + oxidized [2Fe-2S]-[ferredoxin] = oxidized [plastocyanin] + reduced [2Fe-2S]-[ferredoxin]. Functionally, psaA and PsaB bind P700, the primary electron donor of photosystem I (PSI), as well as the electron acceptors A0, A1 and FX. PSI is a plastocyanin-ferredoxin oxidoreductase, converting photonic excitation into a charge separation, which transfers an electron from the donor P700 chlorophyll pair to the spectroscopically characterized acceptors A0, A1, FX, FA and FB in turn. Oxidized P700 is reduced on the lumenal side of the thylakoid membrane by plastocyanin. In Lepidium virginicum (Virginia pepperweed), this protein is Photosystem I P700 chlorophyll a apoprotein A2.